We begin with the raw amino-acid sequence, 460 residues long: Bifunctional protein GlmU (460 aa).

The segment at 1-229 is pyrophosphorylase; it reads MTNYAIILAA…FNESLGVNDR (229 aa). Residues 8-11, Lys-22, Gln-72, and 77-78 each bind UDP-N-acetyl-alpha-D-glucosamine; these read LAAG and GT. Residue Asp-102 coordinates Mg(2+). The UDP-N-acetyl-alpha-D-glucosamine site is built by Gly-139, Glu-154, Asn-169, and Asn-227. Residue Asn-227 participates in Mg(2+) binding. The segment at 230–250 is linker; the sequence is VALATAETVMRQRITQKHMVN. An N-acetyltransferase region spans residues 251 to 460; the sequence is GVTFQNPETV…RLAHHPSRSK (210 aa). Positions 332 and 350 each coordinate UDP-N-acetyl-alpha-D-glucosamine. The active-site Proton acceptor is the His-362. Residues Tyr-365 and Asn-376 each contribute to the UDP-N-acetyl-alpha-D-glucosamine site. Acetyl-CoA is bound by residues Ala-379, 385–386, Ser-404, Ala-422, and Arg-439; that span reads NY.

In the N-terminal section; belongs to the N-acetylglucosamine-1-phosphate uridyltransferase family. This sequence in the C-terminal section; belongs to the transferase hexapeptide repeat family. In terms of assembly, homotrimer. Mg(2+) serves as cofactor.

It localises to the cytoplasm. It catalyses the reaction alpha-D-glucosamine 1-phosphate + acetyl-CoA = N-acetyl-alpha-D-glucosamine 1-phosphate + CoA + H(+). It carries out the reaction N-acetyl-alpha-D-glucosamine 1-phosphate + UTP + H(+) = UDP-N-acetyl-alpha-D-glucosamine + diphosphate. It participates in nucleotide-sugar biosynthesis; UDP-N-acetyl-alpha-D-glucosamine biosynthesis; N-acetyl-alpha-D-glucosamine 1-phosphate from alpha-D-glucosamine 6-phosphate (route II): step 2/2. It functions in the pathway nucleotide-sugar biosynthesis; UDP-N-acetyl-alpha-D-glucosamine biosynthesis; UDP-N-acetyl-alpha-D-glucosamine from N-acetyl-alpha-D-glucosamine 1-phosphate: step 1/1. Its pathway is bacterial outer membrane biogenesis; LPS lipid A biosynthesis. Catalyzes the last two sequential reactions in the de novo biosynthetic pathway for UDP-N-acetylglucosamine (UDP-GlcNAc). The C-terminal domain catalyzes the transfer of acetyl group from acetyl coenzyme A to glucosamine-1-phosphate (GlcN-1-P) to produce N-acetylglucosamine-1-phosphate (GlcNAc-1-P), which is converted into UDP-GlcNAc by the transfer of uridine 5-monophosphate (from uridine 5-triphosphate), a reaction catalyzed by the N-terminal domain. This is Bifunctional protein GlmU from Streptococcus pyogenes serotype M12 (strain MGAS9429).